We begin with the raw amino-acid sequence, 286 residues long: Tryptophan 2,3-dioxygenase (286 aa).

Substrate is bound by residues 55 to 59 (FIIIH), Tyr-117, and Arg-121. A heme-binding site is contributed by His-244. Thr-258 is a substrate binding site.

It belongs to the tryptophan 2,3-dioxygenase family. In terms of assembly, homotetramer. Requires heme as cofactor.

It carries out the reaction L-tryptophan + O2 = N-formyl-L-kynurenine. Its pathway is amino-acid degradation; L-tryptophan degradation via kynurenine pathway; L-kynurenine from L-tryptophan: step 1/2. Heme-dependent dioxygenase that catalyzes the oxidative cleavage of the L-tryptophan (L-Trp) pyrrole ring and converts L-tryptophan to N-formyl-L-kynurenine. Catalyzes the oxidative cleavage of the indole moiety. The protein is Tryptophan 2,3-dioxygenase of Shewanella woodyi (strain ATCC 51908 / MS32).